A 365-amino-acid polypeptide reads, in one-letter code: Protein BZR1 homolog 2 (365 aa).

A compositionally biased stretch (gly residues) spans methionine 1 to glycine 30. Disordered regions lie at residues methionine 1–glutamate 45, serine 113–asparagine 154, serine 191–serine 236, and histidine 344–alanine 365. Residues arginine 31–serine 113 form a required for DNA-binding region. Positions serine 113–proline 144 are enriched in low complexity. Composition is skewed to polar residues over residues serine 215–threonine 233 and leucine 356–alanine 365.

Belongs to the BZR/LAT61 family. Interacts with PUB24.

In terms of biological role, may function in brassinosteroid signaling. The sequence is that of Protein BZR1 homolog 2 from Oryza sativa subsp. japonica (Rice).